Consider the following 150-residue polypeptide: uncharacterized protein (150 aa).

A helical membrane pass occupies residues 19 to 39 (SLGMCVILIDGLIVLTAAFVF).

This sequence to B.subtilis YpjC, YqfU and YitT.

It is found in the cell membrane. This is an uncharacterized protein from Bacillus sp. (strain PS3).